The following is a 646-amino-acid chain: Microtubule-associated protein 9 (646 aa).

The residue at position 2 (serine 2) is an N-acetylserine. Position 12 is a phosphotyrosine (tyrosine 12). Disordered regions lie at residues 75-226 (DFHI…QTEE), 242-418 (SLTS…LEPD), 491-511 (RLEEKNKKKTEEENAMRKGEA), 531-554 (RREKEYERAKKQKEEEAVAEKKKD), 570-597 (LKQKEKEKINERRKEELKRAEKKDKDKQ), and 609-646 (KERQERIERKQKKRHSFLESETHPPWSPPSRTAPSKVF). 2 stretches are compositionally biased toward polar residues: residues 105–119 (ALDSSTPGSEGSSPD) and 157–167 (RSTSSGETSSG). Over residues 188–204 (SHTEEGVRPGVDKEHSI) the composition is skewed to basic and acidic residues. 3 stretches are compositionally biased toward polar residues: residues 205–222 (SEASAPTPSLPRQNGTEL), 280–291 (LLSNENEGSSVL), and 330–340 (PLLSTSPSVIT). Positions 346–357 (EPAKKANEDRNT) are enriched in basic and acidic residues. A compositionally biased stretch (polar residues) spans 386-398 (TKRSPSAATSSHY). Residues 405–418 (LDQKQPRKQSLEPD) show a composition bias toward basic and acidic residues. Residues 442–596 (MHRIKRIESE…KRAEKKDKDK (155 aa)) are a coiled coil. Residues 637–646 (PSRTAPSKVF) show a composition bias toward polar residues.

As to quaternary structure, binds to purified microtubules via its C-terminus.

It is found in the cytoplasm. The protein resides in the cytoskeleton. It localises to the spindle. In terms of biological role, involved in organization of the bipolar mitotic spindle. Required for bipolar spindle assembly, mitosis progression and cytokinesis. May act by stabilizing interphase microtubules. The sequence is that of Microtubule-associated protein 9 (Map9) from Mus musculus (Mouse).